A 2211-amino-acid chain; its full sequence is Norsolorinic acid synthase stcA (2211 aa).

The segment at 11–251 (FLFGDQTYDF…REIPIYVPAH (241 aa)) is starter unit:ACP transacylase (SAT) domain. A disordered region spans residues 358-378 (PAEPPTSINKTPERYSHRPGS). Positions 368 to 378 (TPERYSHRPGS) are enriched in basic and acidic residues. Residues 380 to 812 (RGKLAIVSMS…GGNTAVLVED (433 aa)) form the Ketosynthase family 3 (KS3) domain. Active-site for beta-ketoacyl synthase activity residues include C552, H687, and H730. Positions 912 to 1201 (IACSGQGSQY…MAGMIKTTLD (290 aa)) are malonyl-CoA:ACP transacylase (MAT) domain. The active-site For acyl/malonyl transferase activity is S1004. The disordered stretch occupies residues 1289 to 1316 (TATSDYQLPSDEQVAAKRPSKQDESKEA). The segment at 1327–1468 (HRVVEEKTEP…CTVRFTSEAQ (142 aa)) is N-terminal hotdog fold. A PKS/mFAS DH domain is found at 1327 to 1643 (HRVVEEKTEP…LRRVPRRGLR (317 aa)). Residues 1340 to 1643 (TLVVETDISR…LRRVPRRGLR (304 aa)) are product template (PT) domain. Residue H1359 is the Proton acceptor; for dehydratase activity of the active site. The segment at 1495-1643 (FIRYTTKSGY…LRRVPRRGLR (149 aa)) is C-terminal hotdog fold. The active-site Proton donor; for dehydratase activity is D1555. The tract at residues 1655 to 1706 (RLHGNQQAVKTQAPQRAALKQKPQSSPTQPHASKVAYSRSATSPTAGKPVVA) is disordered. Polar residues-rich tracts occupy residues 1658-1668 (GNQQAVKTQAP) and 1676-1685 (KPQSSPTQPH). Carrier domains follow at residues 1712-1791 (REGD…SGSA) and 1839-1915 (DELF…GTTS). An O-(pantetheine 4'-phosphoryl)serine mark is found at S1749 and S1873. Residues 1912 to 1926 (GTTSGSTTGSSGSGS) are compositionally biased toward low complexity. Residues 1912–1947 (GTTSGSTTGSSGSGSSEDETDSIPSTPEEYTTADTR) form a disordered region. The span at 1934-1945 (IPSTPEEYTTAD) shows a compositional bias: polar residues. Residues 1969–2205 (ILFMLPDGGG…KEHVYLVREL (237 aa)) are thioesterase/Claisen cyclase (TE/CLC) domain. The active-site For thioesterase activity is the S2039.

The cofactor is pantetheine 4'-phosphate.

The catalysed reaction is hexanoyl-[ACP] + 7 malonyl-CoA + 6 H(+) = noranthrone + holo-[ACP] + 7 CO2 + 7 CoA + 2 H2O. It functions in the pathway mycotoxin biosynthesis; sterigmatocystin biosynthesis. Non-reducing polyketide synthase; part of the gene cluster that mediates the biosynthesis of sterigmatocystin (ST), a polyketide-derived furanocoumarin which is part of the most toxic and carcinogenic compounds among the known mycotoxins. The first step in the biosynthesis of sterigmatocystin is the production of hexanoate by the fatty acid synthase (FAS) units stcJ and stcK. The polyketide backbone is assembled by the non-reducing polyketide synthase stcA by condensation of the starter hexanoyl-CoA and 7 malonyl-CoA extender units followed by cyclization and release of norsolorinic acid. Norsolorinic acid is the first stable intermediate in the biosynthesis of sterigmatocystin and is converted into averantin (AVN) by the ketoreductase stcE which reduces the hexanoate ketone to an alcohol. Averantin is then oxidized into 5'-hydroxyaverantin (HAVN) by the cytochrome P450 monooxygenase stcF. 5'-hydroxyaverantin is further converted to 5'-oxyaverantin (OAVN) by the 5'-hydroxyaverantin dehydrogenase stcG. The next step is the conversion of OAVN into averufin (AVF) which is catalyzed by a yet to be identified enzyme. The cytochrome P450 monooxygenase stcB and the flavin-binding monooxygenase stcW are both required for the conversion of averufin to 1-hydroxyversicolorone. The esterase stcI probably catalyzes the formation of versiconal hemiacetal acetate from 1-hydroxyversicolorone. The oxydoreductase stcN then probably catalyzes the biosynthetic step from versiconal to versicolorin B (VERB). The next step is performed by the versicolorin B desaturase stcL to produce versicolorin A (VERA). The ketoreductase stcU and the cytochrome P450 monooxygenase stcS are involved in the conversion of versicolorin A to demethylsterigmatocystin. The Baeyer-Villiger oxidas stcQ and the reductase stcR might be involved in the biosynthetic step from versicolorin A to demethylsterigmatocystin. The final step in the biosynthesis of sterigmatocystin is the methylation of demethylsterigmatocystin catalyzed by the methyltransferase stcP. This chain is Norsolorinic acid synthase stcA, found in Emericella nidulans (strain FGSC A4 / ATCC 38163 / CBS 112.46 / NRRL 194 / M139) (Aspergillus nidulans).